The primary structure comprises 353 residues: Spermidine/putrescine import ATP-binding protein PotA (353 aa).

The ABC transporter domain occupies 7–237; the sequence is IRFERVTKEY…PINRFVADFI (231 aa). ATP is bound at residue 39-46; the sequence is GPSGCGKT.

The protein belongs to the ABC transporter superfamily. Spermidine/putrescine importer (TC 3.A.1.11.1) family. In terms of assembly, the complex is composed of two ATP-binding proteins (PotA), two transmembrane proteins (PotB and PotC) and a solute-binding protein (PotD).

It localises to the cell membrane. The enzyme catalyses ATP + H2O + polyamine-[polyamine-binding protein]Side 1 = ADP + phosphate + polyamineSide 2 + [polyamine-binding protein]Side 1.. In terms of biological role, part of the ABC transporter complex PotABCD involved in spermidine/putrescine import. Responsible for energy coupling to the transport system. The polypeptide is Spermidine/putrescine import ATP-binding protein PotA (Geobacillus kaustophilus (strain HTA426)).